The primary structure comprises 381 residues: Succinyl-diaminopimelate desuccinylase (381 aa).

H69 contacts Zn(2+). Residue D71 is part of the active site. Zn(2+) is bound at residue D103. The Proton acceptor role is filled by E137. 3 residues coordinate Zn(2+): E138, E166, and H355.

Belongs to the peptidase M20A family. DapE subfamily. In terms of assembly, homodimer. Zn(2+) serves as cofactor. It depends on Co(2+) as a cofactor.

The enzyme catalyses N-succinyl-(2S,6S)-2,6-diaminopimelate + H2O = (2S,6S)-2,6-diaminopimelate + succinate. It functions in the pathway amino-acid biosynthesis; L-lysine biosynthesis via DAP pathway; LL-2,6-diaminopimelate from (S)-tetrahydrodipicolinate (succinylase route): step 3/3. Functionally, catalyzes the hydrolysis of N-succinyl-L,L-diaminopimelic acid (SDAP), forming succinate and LL-2,6-diaminopimelate (DAP), an intermediate involved in the bacterial biosynthesis of lysine and meso-diaminopimelic acid, an essential component of bacterial cell walls. In Rickettsia felis (strain ATCC VR-1525 / URRWXCal2) (Rickettsia azadi), this protein is Succinyl-diaminopimelate desuccinylase.